A 282-amino-acid polypeptide reads, in one-letter code: Shikimate dehydrogenase (NADP(+)) (282 aa).

Residues 16-18 (SLS) and T63 each bind shikimate. K67 serves as the catalytic Proton acceptor. Residues N88 and D103 each coordinate shikimate. NADP(+)-binding positions include 128 to 132 (GAGGA) and L219. Y221 provides a ligand contact to shikimate. An NADP(+)-binding site is contributed by G243.

It belongs to the shikimate dehydrogenase family. In terms of assembly, homodimer.

The catalysed reaction is shikimate + NADP(+) = 3-dehydroshikimate + NADPH + H(+). The protein operates within metabolic intermediate biosynthesis; chorismate biosynthesis; chorismate from D-erythrose 4-phosphate and phosphoenolpyruvate: step 4/7. In terms of biological role, involved in the biosynthesis of the chorismate, which leads to the biosynthesis of aromatic amino acids. Catalyzes the reversible NADPH linked reduction of 3-dehydroshikimate (DHSA) to yield shikimate (SA). This Xylella fastidiosa (strain M12) protein is Shikimate dehydrogenase (NADP(+)).